The chain runs to 111 residues: Probable 4-amino-4-deoxy-L-arabinose-phosphoundecaprenol flippase subunit ArnE (111 aa).

Over 1–37 (MIWLVLILASLLSVTGQLCQKQATRPVAINKRRKHIA) the chain is Cytoplasmic. A helical transmembrane segment spans residues 38 to 58 (LWLGLGLVCLGLAMVLWLLVL). An EamA domain is found at 40 to 109 (LGLGLVCLGL…IIGGIVILGS (70 aa)). Residues 59 to 60 (QT) are Periplasmic-facing. The chain crosses the membrane as a helical span at residues 61–81 (VPVGIAYPMLSLNFVWVTLAA). Over 82–87 (TKLWHE) the chain is Cytoplasmic. Residues 88-108 (PVSFRHWCGVAFIIGGIVILG) form a helical membrane-spanning segment. Over 109–111 (STV) the chain is Periplasmic.

The protein belongs to the ArnE family. In terms of assembly, heterodimer of ArnE and ArnF.

The protein localises to the cell inner membrane. Its pathway is bacterial outer membrane biogenesis; lipopolysaccharide biosynthesis. Translocates 4-amino-4-deoxy-L-arabinose-phosphoundecaprenol (alpha-L-Ara4N-phosphoundecaprenol) from the cytoplasmic to the periplasmic side of the inner membrane. This is Probable 4-amino-4-deoxy-L-arabinose-phosphoundecaprenol flippase subunit ArnE from Escherichia fergusonii (strain ATCC 35469 / DSM 13698 / CCUG 18766 / IAM 14443 / JCM 21226 / LMG 7866 / NBRC 102419 / NCTC 12128 / CDC 0568-73).